The sequence spans 340 residues: GPALPP motifs-containing protein 1 (340 aa).

The interval 1 to 304 (MARDLIGPAL…PQERIPFDRD (304 aa)) is disordered. The residue at position 2 (Ala-2) is an N-acetylalanine. Residues 7–12 (GPALPP) carry the GPALPP motif 1 motif. Position 28 is a phosphoserine (Ser-28). Positions 32-37 (GPALPP) match the GPALPP motif 2 motif. Over residues 60–69 (GNQESEEDDS) the composition is skewed to acidic residues. A GPALPP motif 3 motif is present at residues 92–97 (GPALPP). Ser-105 carries the post-translational modification Phosphoserine. Pro residues predominate over residues 107–116 (PRPIIGPALP). The short motif at 112–117 (GPALPP) is the GPALPP motif 4 element. A compositionally biased stretch (basic and acidic residues) spans 124–133 (QKSDKGRDDP). Thr-138 bears the Phosphothreonine mark. A phosphoserine mark is found at Ser-140 and Ser-141. Basic and acidic residues-rich tracts occupy residues 163–187 (EFEK…KPIV), 227–261 (PADR…KRLA), 269–279 (ESKRSESLMDI), and 287–304 (KAAE…FDRD). Lys-271 is covalently cross-linked (Glycyl lysine isopeptide (Lys-Gly) (interchain with G-Cter in SUMO2)). Lys-308 participates in a covalent cross-link: Glycyl lysine isopeptide (Lys-Gly) (interchain with G-Cter in SUMO2).

The protein is GPALPP motifs-containing protein 1 (GPALPP1) of Homo sapiens (Human).